A 792-amino-acid polypeptide reads, in one-letter code: MQGEDARYLKRKVKGGNIDVHPSEKALIVHYEVEATILGEMGDPMLGERKECQKIIRLKSLNANTDITSLARKVVEECKLIHPSKLNEVEQLLYYLQNRRDSLSGKEKKEKSSKPKDPPPFEGMEIDEVANINDMDEYIELLYEDIPDKVRGSALILQLARNPDNLEELLLNETALGALARVLREDWKQSVELATNIIYIFFCFSSFSQFHGLITHYKIGALCMNIIDHELKRHELWQEELSKKKKAVDEDPENQTLRKDYEKTFKKYQGLVVKQEQLLRVALYLLLNLAEDTRTELKMRNKNIVHMLVKALDRDNFELLILVVSFLKKLSIFMENKNDMVEMDIVEKLVKMIPCEHEDLLNITLRLLLNLSFDTGLRNKMVQVGLLPKLTALLGNDNYKQIAMCVLYHISMDDRFKSMFAYTDCIPQLMKMLFECSDERIDLELISFCINLAANKRNVQLICEGNGLKMLMKRALKFKDPLLMKMIRNISQHDGPTKNLFIDYVGDLAAQISNDEEEEFVIECLGTLANLTIPDLDWELVLKEYKLVPYLKDKLKPGAAEDDLVLEVVIMIGTVSMDDSCAALLAKSGIIPALIELLNAQQEDDEFVCQIIYVFYQMVFHQATRDVIIKETQAPAYLIDLMHDKNNEIRKVCDNTLDIIAEYDEEWAKKIQSEKFRWHNSQWLEMVESRQMDESEQYLYGDDRIEPYIHEGDILERPDLFYNSDGLIASEGAISPDFFNDYHLQNGDVVGQHSFPGSLGMDGFGQPVGILGRPATAYGFRPDEPYYYGYGS.

At Ser-60 the chain carries Phosphoserine. The span at 103–119 (LSGKEKKEKSSKPKDPP) shows a compositional bias: basic and acidic residues. The disordered stretch occupies residues 103-124 (LSGKEKKEKSSKPKDPPPFEGM). ARM repeat units follow at residues 333–373 (FMEN…NLSF), 374–412 (DTGL…HISM), 494–533 (DGPT…NLTI), 578–620 (DDSC…QMVF), and 621–662 (HQAT…IIAE).

In terms of assembly, heterotrimer of KIFAP3, KIF3A and KIF3B. Interacts with RAP1GDS1/SMG GDS. Interacts with SMC3 subunit of the cohesin complex. Phosphorylated on tyrosine residues by SRC in vitro; this reduces the binding affinity of the protein for RAP1GDS1.

In terms of biological role, involved in tethering the chromosomes to the spindle pole and in chromosome movement. Binds to the tail domain of the KIF3A/KIF3B heterodimer to form a heterotrimeric KIF3 complex and may regulate the membrane binding of this complex. The polypeptide is Kinesin-associated protein 3 (KIFAP3) (Homo sapiens (Human)).